We begin with the raw amino-acid sequence, 345 residues long: Opioid-binding protein/cell adhesion molecule (345 aa).

Positions 1–27 are cleaved as a signal peptide; it reads MGVCGYLFLPWKCLVVVSLRLLFLVPT. Ig-like C2-type domains follow at residues 39–126, 136–219, and 223–310; these read PKAM…PKTS, PQIM…VKIT, and PPYI…ASIT. N-linked (GlcNAc...) asparagine glycosylation is found at Asn-44, Asn-70, and Asn-140. Cys-57 and Cys-115 are joined by a disulfide. Cystine bridges form between Cys-157-Cys-202 and Cys-244-Cys-296. N-linked (GlcNAc...) asparagine glycans are attached at residues Asn-285, Asn-293, and Asn-306. Residue Asn-322 is the site of GPI-anchor amidated asparagine attachment. A propeptide spans 323 to 345 (removed in mature form); the sequence is SASRALACLWLSGTLLAHFFIKF.

The protein belongs to the immunoglobulin superfamily. IgLON family.

The protein resides in the cell membrane. In terms of biological role, binds opioids in the presence of acidic lipids; probably involved in cell contact. This Homo sapiens (Human) protein is Opioid-binding protein/cell adhesion molecule (OPCML).